The primary structure comprises 414 residues: 3-oxoacyl-[acyl-carrier-protein] synthase 2 (414 aa).

The Ketosynthase family 3 (KS3) domain occupies 4–411 (NKRVVITGMG…GHNAVLVFKK (408 aa)). Active-site for beta-ketoacyl synthase activity residues include Cys-165, His-304, and His-341.

It belongs to the thiolase-like superfamily. Beta-ketoacyl-ACP synthases family.

It carries out the reaction a fatty acyl-[ACP] + malonyl-[ACP] + H(+) = a 3-oxoacyl-[ACP] + holo-[ACP] + CO2. The catalysed reaction is (9Z)-hexadecenoyl-[ACP] + malonyl-[ACP] + H(+) = 3-oxo-(11Z)-octadecenoyl-[ACP] + holo-[ACP] + CO2. The protein operates within lipid metabolism; fatty acid biosynthesis. Functionally, involved in the type II fatty acid elongation cycle. Catalyzes the elongation of a wide range of acyl-ACP by the addition of two carbons from malonyl-ACP to an acyl acceptor. Can efficiently catalyze the conversion of palmitoleoyl-ACP (cis-hexadec-9-enoyl-ACP) to cis-vaccenoyl-ACP (cis-octadec-11-enoyl-ACP), an essential step in the thermal regulation of fatty acid composition. This Staphylococcus aureus (strain MW2) protein is 3-oxoacyl-[acyl-carrier-protein] synthase 2 (fabF).